A 250-amino-acid polypeptide reads, in one-letter code: Tail assembly protein GT (250 aa).

This sequence belongs to the lambda-like tail assembly protein family. In terms of assembly, interacts (via C-terminus) with tail tube protein. Interacts (via N-terminus) with the tail assembly protein G and the tape measure protein.

It localises to the host cytoplasm. In terms of biological role, promotes tail assembly by creating a scaffold for the tail tube proteins. Tail assembly proteins G and GT probably wrap the linear tape measure protein to create a tail assembly scaffold. This allows the polymerization of the tail tube protein, during which G and GT are released, therefore they are absent in the mature virion. The tail assembly protein GT is produced by a rare -1 ribosomal frameshift. The ratio of translated G/GT is about 20, and this ratio is important for proper tail assembly. The chain is Tail assembly protein GT from Escherichia coli (Bacteriophage N15).